The sequence spans 515 residues: FADH(2)-dependent monooxygenase TftD (515 aa).

Position 100 to 104 (100 to 104 (RLPDA)) interacts with substrate. FAD contacts are provided by residues 151–153 (LNF), 157–160 (QTDR), and Thr192. 203-204 (GC) lines the substrate pocket. Position 457–460 (457–460 (TMTR)) interacts with FAD.

Belongs to the FADH(2)-utilizing monooxygenase family. As to quaternary structure, homotetramer. The chlorophenol-4-monooxygenase is composed of an oxygenase component TftD and a reductase component TftC.

Its pathway is xenobiotic degradation. Oxygenase component of a two-component system that degrades 2,4,5-trichlorophenol. Uses FADH(2) supplied by TftC to oxidize 2,4,5-trichlorophenol (2,4,5-TCP) to 2,5-dichloro-p-benzoquinone, which is chemically reduced to 2,5-dichloro-p-hydroquinone (2,5-DiCHQ). Then, TftD oxidizes the latter to 5-chloro-2-hydroxy-p-benzoquinone. This Burkholderia cepacia (Pseudomonas cepacia) protein is FADH(2)-dependent monooxygenase TftD (tftD).